Consider the following 557-residue polypeptide: Potassium-transporting ATPase potassium-binding subunit (557 aa).

A run of 12 helical transmembrane segments spans residues Gly5–Ser25, Leu63–Gly83, Gly132–Ile152, Leu170–Ile190, Phe253–Val273, Leu283–Val303, Val329–Ala349, Ala356–Val376, Gly379–Gly399, Leu416–Met436, Leu484–Ala504, and Leu526–Ala546.

It belongs to the KdpA family. In terms of assembly, the system is composed of three essential subunits: KdpA, KdpB and KdpC.

The protein resides in the cell inner membrane. Its function is as follows. Part of the high-affinity ATP-driven potassium transport (or Kdp) system, which catalyzes the hydrolysis of ATP coupled with the electrogenic transport of potassium into the cytoplasm. This subunit binds the periplasmic potassium ions and delivers the ions to the membrane domain of KdpB through an intramembrane tunnel. The sequence is that of Potassium-transporting ATPase potassium-binding subunit from Escherichia coli O6:H1 (strain CFT073 / ATCC 700928 / UPEC).